A 433-amino-acid polypeptide reads, in one-letter code: Serine--tRNA ligase (433 aa).

Position 239–241 (239–241) interacts with L-serine; sequence TAE. Residue 270–272 participates in ATP binding; that stretch reads RSE. Glutamate 293 is an L-serine binding site. ATP is bound at residue 357 to 360; that stretch reads EISS. Serine 393 is an L-serine binding site.

This sequence belongs to the class-II aminoacyl-tRNA synthetase family. Type-1 seryl-tRNA synthetase subfamily. In terms of assembly, homodimer. The tRNA molecule binds across the dimer.

The protein resides in the cytoplasm. The catalysed reaction is tRNA(Ser) + L-serine + ATP = L-seryl-tRNA(Ser) + AMP + diphosphate + H(+). It catalyses the reaction tRNA(Sec) + L-serine + ATP = L-seryl-tRNA(Sec) + AMP + diphosphate + H(+). Its pathway is aminoacyl-tRNA biosynthesis; selenocysteinyl-tRNA(Sec) biosynthesis; L-seryl-tRNA(Sec) from L-serine and tRNA(Sec): step 1/1. Its function is as follows. Catalyzes the attachment of serine to tRNA(Ser). Is also able to aminoacylate tRNA(Sec) with serine, to form the misacylated tRNA L-seryl-tRNA(Sec), which will be further converted into selenocysteinyl-tRNA(Sec). The sequence is that of Serine--tRNA ligase from Sorangium cellulosum (strain So ce56) (Polyangium cellulosum (strain So ce56)).